A 233-amino-acid chain; its full sequence is Phosducin-like protein C2A9.09 (233 aa).

Residues 58 to 212 enclose the Phosducin domain; sequence EDEEDDEFLQ…DIAALKDPQN (155 aa). A thioredoxin fold region spans residues 86–233; it reads FGSVYPISKP…VNDDLDDDFD (148 aa). The segment at 207–233 is disordered; it reads LKDPQNAEDELGKRDSSVNDDLDDDFD. A phosphoserine mark is found at Ser222 and Ser223. A compositionally biased stretch (acidic residues) spans 224–233; sequence VNDDLDDDFD.

This sequence belongs to the phosducin family.

This is Phosducin-like protein C2A9.09 from Schizosaccharomyces pombe (strain 972 / ATCC 24843) (Fission yeast).